The chain runs to 127 residues: Snaclec CHH-B subunit alpha (127 aa).

Intrachain disulfides connect Cys4–Cys15, Cys32–Cys120, and Cys95–Cys112. One can recognise a C-type lectin domain in the interval 11–121 (YDRYCYKPFK…CEQQHSFICK (111 aa)).

The protein belongs to the snaclec family. As to quaternary structure, heterodimer of subunits alpha and beta; disulfide-linked. As to expression, expressed by the venom gland.

The protein resides in the secreted. Its function is as follows. Binds to the subunit GPIbalpha (GP1BA) of the platelet GPIb/V/IX receptor system. It inhibits ristocetin- and vWF-induced platelet aggregation in platelet-rich plasma by inhibiting the binding of vWF to GPIbalpha. This Crotalus horridus (Timber rattlesnake) protein is Snaclec CHH-B subunit alpha.